The sequence spans 387 residues: F-box/LRR-repeat/kelch-repeat protein At2g29770 (387 aa).

The segment at 1 to 34 (MVFISETSDDGSNGGDPTKNPQEEEEENLPPIPQ) is disordered. In terms of domain architecture, F-box spans 31–78 (PIPQGIPDELIESTVLLIRRCHYPTLSLLSKTFRRVISSSELYKSRFI). An LRR 1 repeat occupies 105 to 128 (CNIPRNISLHLREIKSLPPLNHGS). Kelch repeat units follow at residues 136–183 (HMYV…VIDG) and 184–231 (RIYV…FVTS). An LRR 2 repeat occupies 196–219 (DHWIEVFDIENRIWSSVPHHRYCN).

In Arabidopsis thaliana (Mouse-ear cress), this protein is F-box/LRR-repeat/kelch-repeat protein At2g29770.